The sequence spans 595 residues: Aspartate--tRNA(Asp/Asn) ligase (595 aa).

Residue glutamate 175 participates in L-aspartate binding. Positions 199-202 are aspartate; that stretch reads QQYK. Residues arginine 221 and histidine 454 each coordinate L-aspartate. Position 221-223 (221-223) interacts with ATP; it reads RDE. Glutamate 488 contributes to the ATP binding site. L-aspartate is bound at residue arginine 495. Position 540-543 (540-543) interacts with ATP; the sequence is GIDR.

Belongs to the class-II aminoacyl-tRNA synthetase family. Type 1 subfamily. As to quaternary structure, homodimer.

Its subcellular location is the cytoplasm. It carries out the reaction tRNA(Asx) + L-aspartate + ATP = L-aspartyl-tRNA(Asx) + AMP + diphosphate. Its function is as follows. Aspartyl-tRNA synthetase with relaxed tRNA specificity since it is able to aspartylate not only its cognate tRNA(Asp) but also tRNA(Asn). Reaction proceeds in two steps: L-aspartate is first activated by ATP to form Asp-AMP and then transferred to the acceptor end of tRNA(Asp/Asn). In Brucella canis (strain ATCC 23365 / NCTC 10854 / RM-666), this protein is Aspartate--tRNA(Asp/Asn) ligase.